Reading from the N-terminus, the 230-residue chain is Biosynthetic peptidoglycan transglycosylase (230 aa).

The chain crosses the membrane as a helical span at residues 11–31 (VLLVLVALFVLYQLWIFTLVL).

The protein belongs to the glycosyltransferase 51 family.

The protein resides in the cell inner membrane. The catalysed reaction is [GlcNAc-(1-&gt;4)-Mur2Ac(oyl-L-Ala-gamma-D-Glu-L-Lys-D-Ala-D-Ala)](n)-di-trans,octa-cis-undecaprenyl diphosphate + beta-D-GlcNAc-(1-&gt;4)-Mur2Ac(oyl-L-Ala-gamma-D-Glu-L-Lys-D-Ala-D-Ala)-di-trans,octa-cis-undecaprenyl diphosphate = [GlcNAc-(1-&gt;4)-Mur2Ac(oyl-L-Ala-gamma-D-Glu-L-Lys-D-Ala-D-Ala)](n+1)-di-trans,octa-cis-undecaprenyl diphosphate + di-trans,octa-cis-undecaprenyl diphosphate + H(+). Its pathway is cell wall biogenesis; peptidoglycan biosynthesis. Functionally, peptidoglycan polymerase that catalyzes glycan chain elongation from lipid-linked precursors. The sequence is that of Biosynthetic peptidoglycan transglycosylase from Aromatoleum aromaticum (strain DSM 19018 / LMG 30748 / EbN1) (Azoarcus sp. (strain EbN1)).